The following is a 242-amino-acid chain: Caffeoyl-CoA O-methyltransferase 4 (242 aa).

Lys-16 contacts substrate. Residues Thr-58, Glu-80, 82-83 (GV), Ser-88, Asp-106, and Ala-135 each bind S-adenosyl-L-methionine. Residue Asp-158 participates in substrate binding. Position 158 (Asp-158) interacts with a divalent metal cation. Asp-160 contacts S-adenosyl-L-methionine. A divalent metal cation-binding residues include Asp-184 and Asn-185. Substrate is bound at residue Asn-189.

This sequence belongs to the class I-like SAM-binding methyltransferase superfamily. Cation-dependent O-methyltransferase family. CCoAMT subfamily. The cofactor is Mg(2+). In terms of tissue distribution, mostly expressed in the bottom and middle parts of the stems.

It catalyses the reaction (E)-caffeoyl-CoA + S-adenosyl-L-methionine = (E)-feruloyl-CoA + S-adenosyl-L-homocysteine + H(+). The protein operates within aromatic compound metabolism; phenylpropanoid biosynthesis. Its function is as follows. Methylates caffeoyl-CoA to feruloyl-CoA and 5-hydroxyferuloyl-CoA to sinapoyl-CoA. Plays a role in the synthesis of feruloylated polysaccharides. Involved in the reinforcement of the plant cell wall. Also involved in the responding to wounding or pathogen challenge by the increased formation of cell wall-bound ferulic acid polymers. This chain is Caffeoyl-CoA O-methyltransferase 4 (CCOAOMT4), found in Nicotiana tabacum (Common tobacco).